Reading from the N-terminus, the 765-residue chain is Putative maltooligosyl trehalose synthase (765 aa).

Belongs to the glycosyl hydrolase 13 family. As to quaternary structure, monomer.

The enzyme catalyses 4-[(1-&gt;4)-alpha-D-glucosyl](n-1)-D-glucose = 1-[(1-&gt;4)-alpha-D-glucosyl](n-1)-alpha-D-glucose. Catalyzes the conversion of maltooligosaccharide into the non-reducing saccharide, maltooligosyl trehalose (alpha-maltooligosyl alpha-D-glucoside) by intramolecular transglycosylation. The protein is Putative maltooligosyl trehalose synthase (treY) of Mycobacterium tuberculosis (strain CDC 1551 / Oshkosh).